Consider the following 194-residue polypeptide: Peptidyl-tRNA hydrolase (194 aa).

Tyr19 is a binding site for tRNA. His24 functions as the Proton acceptor in the catalytic mechanism. Positions 69, 71, and 117 each coordinate tRNA.

The protein belongs to the PTH family. Monomer.

The protein resides in the cytoplasm. It catalyses the reaction an N-acyl-L-alpha-aminoacyl-tRNA + H2O = an N-acyl-L-amino acid + a tRNA + H(+). In terms of biological role, hydrolyzes ribosome-free peptidyl-tRNAs (with 1 or more amino acids incorporated), which drop off the ribosome during protein synthesis, or as a result of ribosome stalling. Its function is as follows. Catalyzes the release of premature peptidyl moieties from peptidyl-tRNA molecules trapped in stalled 50S ribosomal subunits, and thus maintains levels of free tRNAs and 50S ribosomes. In Neorickettsia sennetsu (strain ATCC VR-367 / Miyayama) (Ehrlichia sennetsu), this protein is Peptidyl-tRNA hydrolase.